Here is a 113-residue protein sequence, read N- to C-terminus: U11-theraphotoxin-Hhn1j (113 aa).

The N-terminal stretch at 1–21 (MNTVRVTFLLVFVLAVSLGQA) is a signal peptide. Residues 22–74 (DKDENRMEMQEKTEQGKSYLDFAENLLLQKLEELEAKLLEEDSEESRNSRQKR) constitute a propeptide that is removed on maturation. Residues 60–69 (LEEDSEESRN) are compositionally biased toward basic and acidic residues. The segment at 60 to 83 (LEEDSEESRNSRQKRCIGEGVPCD) is disordered. Cystine bridges form between C75–C90, C82–C95, and C89–C110.

This sequence belongs to the neurotoxin 14 (magi-1) family. 01 (HNTX-16) subfamily. Expressed by the venom gland.

The protein resides in the secreted. Probable ion channel inhibitor. In Cyriopagopus hainanus (Chinese bird spider), this protein is U11-theraphotoxin-Hhn1j.